A 1465-amino-acid chain; its full sequence is DNA polymerase III PolC-type (1465 aa).

Residues 427–583 (YVVFDVETTG…YDAEATGRLL (157 aa)) form the Exonuclease domain.

Belongs to the DNA polymerase type-C family. PolC subfamily.

The protein localises to the cytoplasm. It catalyses the reaction DNA(n) + a 2'-deoxyribonucleoside 5'-triphosphate = DNA(n+1) + diphosphate. Required for replicative DNA synthesis. This DNA polymerase also exhibits 3' to 5' exonuclease activity. The chain is DNA polymerase III PolC-type from Streptococcus pyogenes serotype M12 (strain MGAS2096).